A 333-amino-acid polypeptide reads, in one-letter code: Prenyltransferase stbC (333 aa).

Transmembrane regions (helical) follow at residues 74 to 94 (VAFQ…AGCA), 125 to 145 (ANIF…PLPA), 147 to 164 (CQRL…YPFC), 173 to 193 (VILG…AGLP), 201 to 221 (VPTI…DVVY), 247 to 267 (ILLT…GVLV), 272 to 292 (YFFV…IGGI), and 304 to 324 (SGWF…IEYL).

This sequence belongs to the UbiA prenyltransferase family.

It localises to the membrane. It catalyses the reaction orsellinate + (2E,6E)-farnesyl diphosphate = ilicicolinate B + diphosphate. The protein operates within secondary metabolite biosynthesis; terpenoid biosynthesis. In terms of biological role, prenyltransferase; part of the cluster that mediates the biosynthesis of LL-Z1272-beta, also known as ilicicolin B, a prenylated aryl-aldehyde produced by several fungi and that serves as a key pathway intermediate for many fungal meroterpenoids. The first step in the pathway is performed by the non-reducing polyketide synthase stbA that produces orsellinic acid by condensing acetyl-CoA with 3 malonyl-CoA units. The prenyltransferase stbC then prenylates orsenilic acid into grifolic acid. Finally, grifolic acid is reduced to ilicicolin B by the NRPS-like protein stbB. This is Prenyltransferase stbC from Stachybotrys bisbyi (Hyalostachybotrys bisbyi).